A 211-amino-acid chain; its full sequence is Small ribosomal subunit protein uS3 (211 aa).

In terms of domain architecture, KH type-2 spans 38-106; sequence LRNFLKKRLF…EIYLNIQEVR (69 aa).

Belongs to the universal ribosomal protein uS3 family. As to quaternary structure, part of the 30S ribosomal subunit. Forms a tight complex with proteins S10 and S14.

Functionally, binds the lower part of the 30S subunit head. Binds mRNA in the 70S ribosome, positioning it for translation. The polypeptide is Small ribosomal subunit protein uS3 (Geobacter metallireducens (strain ATCC 53774 / DSM 7210 / GS-15)).